A 270-amino-acid chain; its full sequence is Aliphatic sulfonates import ATP-binding protein SsuB 3 (270 aa).

The ABC transporter domain maps to 17-238 (LAVQNLKKAF…ARGSHRLAAL (222 aa)). Residue 49–56 (GRSGCGKS) coordinates ATP.

It belongs to the ABC transporter superfamily. Aliphatic sulfonates importer (TC 3.A.1.17.2) family. In terms of assembly, the complex is composed of two ATP-binding proteins (SsuB), two transmembrane proteins (SsuC) and a solute-binding protein (SsuA).

It is found in the cell inner membrane. The catalysed reaction is ATP + H2O + aliphatic sulfonate-[sulfonate-binding protein]Side 1 = ADP + phosphate + aliphatic sulfonateSide 2 + [sulfonate-binding protein]Side 1.. Functionally, part of the ABC transporter complex SsuABC involved in aliphatic sulfonates import. Responsible for energy coupling to the transport system. This is Aliphatic sulfonates import ATP-binding protein SsuB 3 from Pseudomonas syringae pv. tomato (strain ATCC BAA-871 / DC3000).